A 574-amino-acid polypeptide reads, in one-letter code: Actin-binding protein wsp1 (574 aa).

Residues 19–130 (IPKSTNKIIA…KKVLDKGCHP (112 aa)) form the WH1 domain. 3 disordered regions span residues 144-186 (KGSS…ELLN), 221-494 (AGTP…IAEL), and 517-574 (KSRK…DEWD). Residues 149-158 (HAPNNSNIQP) show a composition bias toward polar residues. 2 stretches are compositionally biased toward pro residues: residues 230 to 240 (PPIPPSIPSSR) and 251 to 260 (PAPPPIPPPS). Composition is skewed to low complexity over residues 297-306 (SRVSAAALAA) and 324-335 (KPPIGNGSSNSS). Residues 352–368 (PLPPQGRSAPPPPPPRS) show a composition bias toward pro residues. Residue Ser-386 is modified to Phosphoserine. Residues 415-485 (PPVPTPPSLP…PPPAPAPAPA (71 aa)) are compositionally biased toward pro residues. The WH2 domain occupies 499-518 (GRANLMASIRASGGMDLLKS). Over residues 521–545 (VSASPSVASTKTSNPPVEAPPSNNL) the composition is skewed to polar residues. A compositionally biased stretch (acidic residues) spans 563 to 574 (SDEEDEDDDEWD).

Interacts with vrp1.

The protein resides in the cytoplasm. It is found in the cytoskeleton. In terms of biological role, has a role in regulating actin assembly, so regulating polarized growth. The chain is Actin-binding protein wsp1 (wsp1) from Schizosaccharomyces pombe (strain 972 / ATCC 24843) (Fission yeast).